A 283-amino-acid chain; its full sequence is Protein/nucleic acid deglycase HchA (283 aa).

Zn(2+) contacts are provided by His-86, Glu-91, and His-123. Residue Cys-185 is the Nucleophile of the active site.

Belongs to the peptidase C56 family. HchA subfamily. Homodimer.

Its subcellular location is the cytoplasm. It catalyses the reaction N(omega)-(1-hydroxy-2-oxopropyl)-L-arginyl-[protein] + H2O = lactate + L-arginyl-[protein] + H(+). The enzyme catalyses N(6)-(1-hydroxy-2-oxopropyl)-L-lysyl-[protein] + H2O = lactate + L-lysyl-[protein] + H(+). The catalysed reaction is S-(1-hydroxy-2-oxopropyl)-L-cysteinyl-[protein] + H2O = lactate + L-cysteinyl-[protein] + H(+). It carries out the reaction N(omega)-(1-hydroxy-2-oxoethyl)-L-arginyl-[protein] + H2O = L-arginyl-[protein] + glycolate + H(+). It catalyses the reaction N(6)-(1-hydroxy-2-oxoethyl)-L-lysyl-[protein] + H2O = glycolate + L-lysyl-[protein] + H(+). The enzyme catalyses S-(1-hydroxy-2-oxoethyl)-L-cysteinyl-[protein] + H2O = glycolate + L-cysteinyl-[protein] + H(+). The catalysed reaction is N(2)-(1-hydroxy-2-oxopropyl)-dGTP + H2O = lactate + dGTP + H(+). It carries out the reaction N(2)-(1-hydroxy-2-oxopropyl)-GTP + H2O = lactate + GTP + H(+). It catalyses the reaction N(2)-(1-hydroxy-2-oxopropyl)-GDP + H2O = lactate + GDP + H(+). The enzyme catalyses N(2)-(1-hydroxy-2-oxopropyl)-GMP + H2O = lactate + GMP + H(+). The catalysed reaction is N(2)-(1-hydroxy-2-oxoethyl)-dGTP + H2O = dGTP + glycolate + H(+). It carries out the reaction N(2)-(1-hydroxy-2-oxoethyl)-GTP + H2O = glycolate + GTP + H(+). It catalyses the reaction N(2)-(1-hydroxy-2-oxoethyl)-GDP + H2O = glycolate + GDP + H(+). The enzyme catalyses N(2)-(1-hydroxy-2-oxoethyl)-GMP + H2O = glycolate + GMP + H(+). The catalysed reaction is an N(2)-(1-hydroxy-2-oxopropyl)-guanosine in RNA + H2O = a guanosine in RNA + lactate + H(+). It carries out the reaction an N(2)-(1-hydroxy-2-oxopropyl)-2'-deoxyguanosine in DNA + H2O = a 2'-deoxyguanosine in DNA + lactate + H(+). It catalyses the reaction an N(2)-(1-hydroxy-2-oxoethyl)-guanosine in RNA + H2O = a guanosine in RNA + glycolate + H(+). The enzyme catalyses an N(2)-(1-hydroxy-2-oxoethyl)-2'-deoxyguanosine in DNA + H2O = a 2'-deoxyguanosine in DNA + glycolate + H(+). Its function is as follows. Protein and nucleotide deglycase that catalyzes the deglycation of the Maillard adducts formed between amino groups of proteins or nucleotides and reactive carbonyl groups of glyoxals. Thus, functions as a protein deglycase that repairs methylglyoxal- and glyoxal-glycated proteins, and releases repaired proteins and lactate or glycolate, respectively. Deglycates cysteine, arginine and lysine residues in proteins, and thus reactivates these proteins by reversing glycation by glyoxals. Acts on early glycation intermediates (hemithioacetals and aminocarbinols), preventing the formation of Schiff bases and advanced glycation endproducts (AGE). Also functions as a nucleotide deglycase able to repair glycated guanine in the free nucleotide pool (GTP, GDP, GMP, dGTP) and in DNA and RNA. Is thus involved in a major nucleotide repair system named guanine glycation repair (GG repair), dedicated to reversing methylglyoxal and glyoxal damage via nucleotide sanitization and direct nucleic acid repair. Plays an important role in protecting cells from carbonyl stress. The sequence is that of Protein/nucleic acid deglycase HchA from Escherichia coli O45:K1 (strain S88 / ExPEC).